Reading from the N-terminus, the 227-residue chain is Phosphoribosylformylglycinamidine synthase subunit PurQ (227 aa).

Residues 3–225 (FAVIVFPGSN…LKQWRETYVV (223 aa)) enclose the Glutamine amidotransferase type-1 domain. Cys86 serves as the catalytic Nucleophile. Active-site residues include His194 and Glu196.

As to quaternary structure, part of the FGAM synthase complex composed of 1 PurL, 1 PurQ and 2 PurS subunits.

Its subcellular location is the cytoplasm. It catalyses the reaction N(2)-formyl-N(1)-(5-phospho-beta-D-ribosyl)glycinamide + L-glutamine + ATP + H2O = 2-formamido-N(1)-(5-O-phospho-beta-D-ribosyl)acetamidine + L-glutamate + ADP + phosphate + H(+). The catalysed reaction is L-glutamine + H2O = L-glutamate + NH4(+). The protein operates within purine metabolism; IMP biosynthesis via de novo pathway; 5-amino-1-(5-phospho-D-ribosyl)imidazole from N(2)-formyl-N(1)-(5-phospho-D-ribosyl)glycinamide: step 1/2. In terms of biological role, part of the phosphoribosylformylglycinamidine synthase complex involved in the purines biosynthetic pathway. Catalyzes the ATP-dependent conversion of formylglycinamide ribonucleotide (FGAR) and glutamine to yield formylglycinamidine ribonucleotide (FGAM) and glutamate. The FGAM synthase complex is composed of three subunits. PurQ produces an ammonia molecule by converting glutamine to glutamate. PurL transfers the ammonia molecule to FGAR to form FGAM in an ATP-dependent manner. PurS interacts with PurQ and PurL and is thought to assist in the transfer of the ammonia molecule from PurQ to PurL. In Bacillus thuringiensis (strain Al Hakam), this protein is Phosphoribosylformylglycinamidine synthase subunit PurQ.